We begin with the raw amino-acid sequence, 533 residues long: MPHAHPADIDGHHLTPDTVAAIARGQRAAIVPEPVLGKVADARARFEQVAAANVPIYGVSTGFGELVHNWVDIEHGRALQENLLRSHCAGVGPLFSRDEVRAMMVARANALARGYSAVRPAVIEQLLKYLEAGITPAVPQVGSLGASGDLAPLSHVAITLIGEGKVLTEDGGTAPTAEVLRERGITPLALAYKEGLALINGTSAMTGVSCLLLETLRAQVQQAEIIAALALEGLSASADAFMAHGHDIAKPHPGQIRSAANMRALLADSARLSGHGELSAEMKTRAGEAKNTGTGVFIQKAYTLRCIPQVLGAVRDTLDHCATVVERELNSSNDNPLFFEDGELFHGGNFHGQQVAFAMDFLAIAATQLGVVSERRLNRLLSPHLNNNLPAFLAAANEGLSCGFAGAQYPATALIAENRTICSPASIQSVPSNGDNQDVVSMGLIAARNARRILDNNQYILALELLASCQAAELAGAVEQLAPAGRAVFAFVRERVPFLSIDRYMTDDIEAMAALLRQGALVEVVRGAGIELA.

Tyrosine 57 functions as the Proton donor/acceptor in the catalytic mechanism. Residue histidine 87 coordinates substrate. Residues 146 to 148 constitute a cross-link (5-imidazolinone (Ala-Gly)); sequence ASG. A 2,3-didehydroalanine (Ser) modification is found at serine 147. Residues asparagine 200 and arginine 305 each contribute to the substrate site.

The protein belongs to the TAL/TAM family. As to quaternary structure, homotetramer; dimer of dimers. In terms of processing, contains an active site 4-methylidene-imidazol-5-one (MIO), which is formed autocatalytically by cyclization and dehydration of residues Ala-Ser-Gly.

The enzyme catalyses L-tyrosine = (E)-4-coumarate + NH4(+). It carries out the reaction L-tyrosine = 3-amino-3-(4-hydroxyphenyl)propanoate. Functionally, has ammonia-lyase and, to a lesser extent, aminomutase activity. Catalyzes the rearrangement of L-tyrosine to R-beta-tyrosine and S-beta-tyrosine. Does not accept L-histidine or L-phenylalanine as substrates. This Cupriavidus metallidurans (strain ATCC 43123 / DSM 2839 / NBRC 102507 / CH34) (Ralstonia metallidurans) protein is Tyrosine ammonia-lyase.